The following is a 1402-amino-acid chain: Roundabout homolog 3 (1402 aa).

The signal sequence occupies residues 1–20; it reads MLRYLLKTLLQMNLFADSLA. At 21-891 the chain is on the extracellular side; the sequence is RDISNSSELL…ERLAKVLRKP (871 aa). N-linked (GlcNAc...) asparagine glycosylation is found at asparagine 25, asparagine 34, and asparagine 53. 5 Ig-like C2-type domains span residues 64–160, 166–253, 258–342, 347–440, and 450–531; these read PRIV…ASLE, DDFR…AELV, PSFL…GSLS, PQFV…ALLE, and PPII…GEAT. Residues cysteine 85 and cysteine 143 are joined by a disulfide bond. N-linked (GlcNAc...) asparagine glycosylation occurs at asparagine 156. 2 cysteine pairs are disulfide-bonded: cysteine 187-cysteine 236 and cysteine 279-cysteine 326. N-linked (GlcNAc...) asparagine glycosylation is found at asparagine 355, asparagine 363, asparagine 410, asparagine 459, and asparagine 503. Cysteines 368 and 424 form a disulfide. Cysteine 472 and cysteine 521 form a disulfide bridge. 2 disordered regions span residues 540 to 561 and 639 to 662; these read EDWGASPGPATGPSNPPGPPSQ and EPSPVSEPVQTQDSSLSRPAEDPW. Low complexity predominate over residues 543–552; the sequence is GASPGPATGP. 3 Fibronectin type-III domains span residues 558-652, 672-766, and 771-869; these read PPSQ…TQDS, AVRM…IPEE, and PPQG…FPPA. Residues 646–655 show a composition bias toward polar residues; that stretch reads PVQTQDSSLS. N-linked (GlcNAc...) asparagine glycosylation is found at asparagine 784, asparagine 813, and asparagine 820. The helical transmembrane segment at 892-912 threads the bilayer; sequence AFLAGSSAACGALLLGFCAAL. Topologically, residues 913–1402 are cytoplasmic; the sequence is YRRQKQRKEL…PGRNRREEPR (490 aa). 3 disordered regions span residues 965 to 989, 1032 to 1307, and 1340 to 1402; these read SWPHPPRSPSAQEPRGSCCPSNPDP, FHGG…VVQA, and GRPS…EEPR. 2 stretches are compositionally biased toward polar residues: residues 1038–1049 and 1142–1152; these read QHSSGDPSTWSQ and PSPTSSYGQQS. Residues 1158–1169 show a composition bias toward pro residues; the sequence is PSPPDPPQPPTD. 2 stretches are compositionally biased toward low complexity: residues 1178–1191 and 1215–1228; these read RRVPLGPSSPLSVS and ASPSPVPSTASSAP. The segment covering 1243–1254 has biased composition (basic residues); that stretch reads HGHRARIRKKPK. At serine 1263 the chain carries Phosphoserine. A compositionally biased stretch (basic and acidic residues) spans 1294–1304; the sequence is LERERSGERRV. Over residues 1346–1357 the composition is skewed to polar residues; the sequence is SHGQGTSTCSTA. The span at 1358-1371 shows a compositional bias: low complexity; that stretch reads GSNSSRGSNSSRGS.

This sequence belongs to the immunoglobulin superfamily. ROBO family. Interacts (via Fibronectin type-III 1 domain) with NELL2 (via the EGF domains) with a 3:3 stoichiometry; this interaction promotes oligomerization of ROBO3 resulting in the repulsion of commissural axons in the midline. In terms of tissue distribution, detected in embryonal spinal cord and hindbrain.

It is found in the membrane. Its function is as follows. Receptor involved in axon guidance during development. Acts as a multifunctional regulator of pathfinding that simultaneously mediates NELL2 repulsion, inhibits SLIT repulsion, and facilitates Netrin-1/NTN1 attraction. In spinal cord development plays a role in guiding commissural axons probably by preventing premature sensitivity to Slit proteins thus inhibiting Slit signaling through ROBO1/ROBO2. Binding OF NELL2 to the receptor ROBO3 promotes oligomerization of ROBO3, resulting in the repulsion of commissural axons in the midline. ROBO3 also indirectly boosts axon attraction to NTN1 without interacting with NTN1 itself. In terms of biological role, mediates NELL2 premature repulsion of commissural axons during midline crossing. After midline crossing by the commissural axons, may, in concert with ROBO1 and ROBO2, prevent midline recrossing. Does not mediate NELL2 signaling. In Mus musculus (Mouse), this protein is Roundabout homolog 3.